The primary structure comprises 88 residues: Putative membrane protein insertion efficiency factor (88 aa).

The protein belongs to the UPF0161 family.

The protein localises to the cell inner membrane. In terms of biological role, could be involved in insertion of integral membrane proteins into the membrane. This Synechococcus sp. (strain CC9311) protein is Putative membrane protein insertion efficiency factor.